The chain runs to 292 residues: Small ribosomal subunit biogenesis GTPase RsgA (292 aa).

The region spanning 64-221 is the CP-type G domain; that stretch reads RSELFRPAVA…LVDTPGFSSL (158 aa). Residues 113 to 116 and 164 to 172 each bind GTP; these read NKMD and GPSGVGKST. Residues C245, C250, H252, and C258 each coordinate Zn(2+).

Belongs to the TRAFAC class YlqF/YawG GTPase family. RsgA subfamily. Monomer. Associates with 30S ribosomal subunit, binds 16S rRNA. The cofactor is Zn(2+).

It is found in the cytoplasm. Functionally, one of several proteins that assist in the late maturation steps of the functional core of the 30S ribosomal subunit. Helps release RbfA from mature subunits. May play a role in the assembly of ribosomal proteins into the subunit. Circularly permuted GTPase that catalyzes slow GTP hydrolysis, GTPase activity is stimulated by the 30S ribosomal subunit. The protein is Small ribosomal subunit biogenesis GTPase RsgA of Clostridium botulinum (strain Okra / Type B1).